The primary structure comprises 199 residues: Large ribosomal subunit protein bL25 (199 aa).

This sequence belongs to the bacterial ribosomal protein bL25 family. CTC subfamily. Part of the 50S ribosomal subunit; part of the 5S rRNA/L5/L18/L25 subcomplex. Contacts the 5S rRNA. Binds to the 5S rRNA independently of L5 and L18.

Its function is as follows. This is one of the proteins that binds to the 5S RNA in the ribosome where it forms part of the central protuberance. This is Large ribosomal subunit protein bL25 from Syntrophobacter fumaroxidans (strain DSM 10017 / MPOB).